A 123-amino-acid chain; its full sequence is uncharacterized protein (123 aa).

This is an uncharacterized protein from Schizosaccharomyces pombe (strain 972 / ATCC 24843) (Fission yeast).